The chain runs to 335 residues: Malate dehydrogenase 1 (335 aa).

Residues 11–16 (GAGNVG) and D35 contribute to the NAD(+) site. Substrate-binding residues include R97 and R103. Residues N110 and 133–135 (VTN) contribute to the NAD(+) site. N135 and R166 together coordinate substrate. H190 (proton acceptor) is an active-site residue.

This sequence belongs to the LDH/MDH superfamily. MDH type 3 family.

It catalyses the reaction (S)-malate + NAD(+) = oxaloacetate + NADH + H(+). Catalyzes the reversible oxidation of malate to oxaloacetate. The polypeptide is Malate dehydrogenase 1 (mdh1) (Aquifex aeolicus (strain VF5)).